A 421-amino-acid chain; its full sequence is CinA-like protein (421 aa).

Belongs to the CinA family.

This chain is CinA-like protein, found in Synechococcus elongatus (strain ATCC 33912 / PCC 7942 / FACHB-805) (Anacystis nidulans R2).